The chain runs to 262 residues: R3H domain-containing protein 4 (262 aa).

2 disordered regions span residues 1-27 (MVAL…PGCL) and 132-155 (YLED…RRED). A compositionally biased stretch (basic and acidic residues) spans 146-155 (GRGEDRRRED). The region spanning 182–245 (METLESWEER…RRQMKVSNRH (64 aa)) is the R3H domain.

Its subcellular location is the nucleus. This chain is R3H domain-containing protein 4 (R3hdm4), found in Mus musculus (Mouse).